The following is a 413-amino-acid chain: Multidrug resistance protein MdtA (413 aa).

The first 20 residues, 1 to 20 (MKGSNTFRWAIAIGVVVAAA), serve as a signal peptide directing secretion. Disordered stretches follow at residues 31–57 (SPTAAPGVAAQAPHTAAAGRRGMRDGP) and 392–413 (PQTTMADEKSPSRHEGQKGARA). Residues 397–413 (ADEKSPSRHEGQKGARA) show a composition bias toward basic and acidic residues.

The protein belongs to the membrane fusion protein (MFP) (TC 8.A.1) family. In terms of assembly, part of a tripartite efflux system composed of MdtA, MdtB and MdtC.

The protein resides in the cell inner membrane. This Salmonella heidelberg (strain SL476) protein is Multidrug resistance protein MdtA.